The following is a 271-amino-acid chain: Fatty acid elongase A (271 aa).

7 helical membrane-spanning segments follow: residues 35–55, 68–88, 102–122, 139–159, 165–185, 198–220, and 237–257; these read ILFP…LQIF, AMFH…GIVI, IICK…FYLS, SLLF…WANL, CQWV…FYYF, HITT…WHFY, and TSAF…QFFV.

Belongs to the ELO family.

The protein localises to the membrane. The catalysed reaction is a very-long-chain acyl-CoA + malonyl-CoA + H(+) = a very-long-chain 3-oxoacyl-CoA + CO2 + CoA. Its function is as follows. Fatty acid elongase with strict substrate specificity for monounsaturated fatty acids, in particular 16:1 (delta-9) to produce the unusual 18:1 (delta-11) fatty acid. This is Fatty acid elongase A (eloA) from Dictyostelium discoideum (Social amoeba).